A 398-amino-acid polypeptide reads, in one-letter code: Nicotinate phosphoribosyltransferase (398 aa).

Histidine 214 bears the Phosphohistidine; by autocatalysis mark.

This sequence belongs to the NAPRTase family. Transiently phosphorylated on a His residue during the reaction cycle. Phosphorylation strongly increases the affinity for substrates and increases the rate of nicotinate D-ribonucleotide production. Dephosphorylation regenerates the low-affinity form of the enzyme, leading to product release.

It catalyses the reaction nicotinate + 5-phospho-alpha-D-ribose 1-diphosphate + ATP + H2O = nicotinate beta-D-ribonucleotide + ADP + phosphate + diphosphate. The protein operates within cofactor biosynthesis; NAD(+) biosynthesis; nicotinate D-ribonucleotide from nicotinate: step 1/1. Functionally, catalyzes the synthesis of beta-nicotinate D-ribonucleotide from nicotinate and 5-phospho-D-ribose 1-phosphate at the expense of ATP. This chain is Nicotinate phosphoribosyltransferase, found in Xanthomonas campestris pv. campestris (strain B100).